The chain runs to 269 residues: 5'-nucleotidase SurE (269 aa).

The a divalent metal cation site is built by D8, D9, S40, and N93.

The protein belongs to the SurE nucleotidase family. A divalent metal cation serves as cofactor.

The protein localises to the cytoplasm. It catalyses the reaction a ribonucleoside 5'-phosphate + H2O = a ribonucleoside + phosphate. In terms of biological role, nucleotidase that shows phosphatase activity on nucleoside 5'-monophosphates. The polypeptide is 5'-nucleotidase SurE (Caulobacter sp. (strain K31)).